The primary structure comprises 262 residues: ATP synthase subunit a (262 aa).

Transmembrane regions (helical) follow at residues 30 to 50 (ITSLTNIAILFIIGLLVLTIF), 64 to 84 (WNIVLETWVASILGIVKDQIG), 91 to 111 (LIYFPLIFTFFSFVFISNILG), 123 to 143 (ISVTLGLSIAIMIGVTLIGFS), 149 to 169 (FFSLFVPKGTPLALVPLLVLI), 195 to 215 (LFGVISALSVSACIAVSSLLL), and 220 to 240 (ITLPLAVLVVLYGLELLVALL).

The protein belongs to the ATPase A chain family. In terms of assembly, F-type ATPases have 2 components, CF(1) - the catalytic core - and CF(0) - the membrane proton channel. CF(1) has five subunits: alpha(3), beta(3), gamma(1), delta(1), epsilon(1). CF(0) has three main subunits: a, b and c.

Its subcellular location is the mitochondrion inner membrane. In terms of biological role, mitochondrial membrane ATP synthase (F(1)F(0) ATP synthase or Complex V) produces ATP from ADP in the presence of a proton gradient across the membrane which is generated by electron transport complexes of the respiratory chain. F-type ATPases consist of two structural domains, F(1) - containing the extramembraneous catalytic core and F(0) - containing the membrane proton channel, linked together by a central stalk and a peripheral stalk. During catalysis, ATP synthesis in the catalytic domain of F(1) is coupled via a rotary mechanism of the central stalk subunits to proton translocation. Key component of the proton channel; it may play a direct role in the translocation of protons across the membrane. This Allomyces macrogynus protein is ATP synthase subunit a (ATP6).